We begin with the raw amino-acid sequence, 559 residues long: Complement component receptor 1-like protein (559 aa).

The signal sequence occupies residues 1–35 (MEASSPLDPVGRLVAFCRGGVHLAVLLLFLSPSTL). 7 Sushi domains span residues 36–96 (GQCP…VCIR), 97–158 (KQCE…ICES), 159–229 (IPCE…QCIE), 231–290 (NKCT…SCFK), 292–354 (KSCG…VCEQ), 355–415 (VICK…KCVS), and 417–477 (VICK…KCVS). At 36-482 (GQCPAPPLFP…PKCVSRSNSG (447 aa)) the chain is on the extracellular side. 14 cysteine pairs are disulfide-bonded: Cys-38–Cys-81, Cys-68–Cys-94, Cys-99–Cys-140, Cys-126–Cys-156, Cys-161–Cys-210, Cys-190–Cys-227, Cys-233–Cys-275, Cys-261–Cys-288, Cys-294–Cys-336, Cys-322–Cys-352, Cys-357–Cys-400, Cys-386–Cys-413, Cys-419–Cys-462, and Cys-448–Cys-475. Residue Thr-53 is glycosylated (O-linked (GalNAc...) threonine). Asn-331 is a glycosylation site (N-linked (GlcNAc...) asparagine). Residues 483–503 (LIAGIFIGIIVLILFIIFSYW) traverse the membrane as a helical segment. Topologically, residues 504 to 559 (MIMKFKKRNSTNEKCKEVGIYLNSKEDSCVQPQSLLTSQENNSTSSPARNSLTQEV) are cytoplasmic. Phosphoserine occurs at positions 527, 531, and 537. The segment at 535-559 (PQSLLTSQENNSTSSPARNSLTQEV) is disordered. The residue at position 540 (Thr-540) is a Phosphothreonine. Ser-554 bears the Phosphoserine mark.

It belongs to the receptors of complement activation (RCA) family. Interacts with C3b.

The protein localises to the membrane. Functionally, acts as a cofactor for complement factor I, a serine protease which protects autologous cells against complement-mediated injury by cleaving C3b and C4b deposited on host tissue. Also acts as a decay-accelerating factor, preventing the formation of C4b2a and C3bBb, the amplification convertases of the complement cascade. Seems to act as a costimulatory factor for T-cells. May play a crucial role in early embryonic development by maintaining fetomaternal tolerance. The polypeptide is Complement component receptor 1-like protein (Cr1l) (Rattus norvegicus (Rat)).